The sequence spans 197 residues: Phosphoheptose isomerase (197 aa).

In terms of domain architecture, SIS spans 34–196 (MVHCLLGGNK…DRTLFPQDEQ (163 aa)). 49–51 (NGG) serves as a coordination point for substrate. Zn(2+)-binding residues include H58 and E62. Substrate-binding positions include E62, 91–92 (ND), 117–119 (STS), S122, and Q172. Residues Q172 and H180 each contribute to the Zn(2+) site.

The protein belongs to the SIS family. GmhA subfamily. In terms of assembly, homotetramer. The cofactor is Zn(2+).

It is found in the cytoplasm. It catalyses the reaction 2 D-sedoheptulose 7-phosphate = D-glycero-alpha-D-manno-heptose 7-phosphate + D-glycero-beta-D-manno-heptose 7-phosphate. The protein operates within carbohydrate biosynthesis; D-glycero-D-manno-heptose 7-phosphate biosynthesis; D-glycero-alpha-D-manno-heptose 7-phosphate and D-glycero-beta-D-manno-heptose 7-phosphate from sedoheptulose 7-phosphate: step 1/1. Catalyzes the isomerization of sedoheptulose 7-phosphate in D-glycero-D-manno-heptose 7-phosphate. The protein is Phosphoheptose isomerase of Shewanella sp. (strain W3-18-1).